The chain runs to 1551 residues: Dual oxidase 1 (1551 aa).

Positions 1–21 (MAVYSAVAWILLFGVLASLGA) are cleaved as a signal peptide. At 22–596 (QNPVSWEVQR…YFKGSGFGFG (575 aa)) the chain is on the extracellular side. Positions 26–593 (SWEVQRFDGW…VRDYFKGSGF (568 aa)) are peroxidase-like; mediates peroxidase activity. N-linked (GlcNAc...) asparagine glycosylation is found at Asn94, Asn342, Asn354, Asn461, and Asn534. The helical transmembrane segment at 597–617 (LTIGTLCCFPLVSLLSAWIVA) threads the bilayer. Topologically, residues 618-1044 (RLRMRNFKRL…KRFIENYRRH (427 aa)) are cytoplasmic. EF-hand domains are found at residues 815 to 850 (PQDM…FMKG), 851 to 886 (SPEE…FIEI), and 895 to 930 (QLAE…HDSD). Positions 828, 830, 832, 834, 839, 864, 866, 868, and 875 each coordinate Ca(2+). The segment at 956–1248 (YISQEKICPS…GSFALIQMPR (293 aa)) is interaction with TXNDC11. The chain crosses the membrane as a helical span at residues 1045–1065 (IGCVAVFYTITGALFLERAYY). Over 1066–1080 (YAFAAHHSGITDTTR) the chain is Extracellular. The helical transmembrane segment at 1081 to 1101 (VGIILSRGTAASISFMFSYIL) threads the bilayer. Residues 1087–1269 (RGTAASISFM…YVGDKLVSLS (183 aa)) form the Ferric oxidoreductase domain. The Cytoplasmic segment spans residues 1102–1136 (LTMCRNLITFLRETFLNRYIPFDAAVDFHRFIAST). Residues 1137 to 1157 (AIILTVLHSAGHVVNVYLFSI) traverse the membrane as a helical segment. The Extracellular segment spans residues 1158-1188 (SPLSVLSCLFPDLFHDDGSEFPQKYYWWFFQ). A helical transmembrane segment spans residues 1189-1209 (TVPGLTGVLLLLALAIMYVFA). The Cytoplasmic segment spans residues 1210 to 1226 (SHHFRRRSFRGFWLTHH). Residues 1227-1247 (LYIFLYILLIIHGSFALIQMP) form a helical membrane-spanning segment. Position 1248 (Arg1248) is a topological domain, extracellular. A helical transmembrane segment spans residues 1249-1269 (FHIFFLVPAIIYVGDKLVSLS). The FAD-binding FR-type domain maps to 1270-1376 (RKKVEISVVK…DGPFGEGHQE (107 aa)). The Cytoplasmic portion of the chain corresponds to 1270–1551 (RKKVEISVVK…THFSHHYENF (282 aa)).

The protein in the N-terminal section; belongs to the peroxidase family. As to quaternary structure, interacts with TXNDC11, TPO and CYBA. N-glycosylated. As to expression, expressed in thyrocytes (at protein level).

The protein resides in the apical cell membrane. The enzyme catalyses NADH + O2 + H(+) = H2O2 + NAD(+). It carries out the reaction NADPH + O2 + H(+) = H2O2 + NADP(+). The protein operates within hormone biosynthesis; thyroid hormone biosynthesis. With respect to regulation, the NADPH oxidase activity is calcium-dependent. Peroxidase activity is inhibited by aminobenzohydrazide. Generates hydrogen peroxide which is required for the activity of thyroid peroxidase/TPO and lactoperoxidase/LPO. Plays a role in thyroid hormones synthesis and lactoperoxidase-mediated antimicrobial defense at the surface of mucosa. May have its own peroxidase activity through its N-terminal peroxidase-like domain. This is Dual oxidase 1 (Duox1) from Rattus norvegicus (Rat).